The primary structure comprises 349 residues: T-cell immunoglobulin and mucin domain-containing protein 2 (349 aa).

The N-terminal stretch at 1–20 (MVQLQVFISGLLLLLPGAVA) is a signal peptide. Residues 21–275 (SYTVVQGHSV…QKLQRNPTKG (255 aa)) are Extracellular-facing. The region spanning 22-123 (YTVVQGHSVT…AFYFVDYLLE (102 aa)) is the Ig-like V-type domain. Intrachain disulfides connect Cys34–Cys107, Cys48–Cys59, and Cys54–Cys106. N-linked (GlcNAc...) asparagine glycans are attached at residues Asn84 and Asn89. Residues 128-271 (LPTSPPTRPT…AIPPQKLQRN (144 aa)) form a disordered region. Residues 136 to 215 (PTNTGRPTTT…TSTPPTPEQT (80 aa)) show a composition bias toward low complexity. Over residues 222 to 260 (ATTYYPDQTTAEVTEAPSHTPTDWNNTATSSDDSWNSDT) the composition is skewed to polar residues. The chain crosses the membrane as a helical span at residues 276–296 (FYVGMSFAALLLLLLASTVAI). At 297-349 (TRYMVMRKNSGSLRFVAFPVSKIGASQNKVVEQARIEDEVYIIEDSPYFEEES) the chain is on the cytoplasmic side.

This sequence belongs to the immunoglobulin superfamily. TIM family. As to quaternary structure, homodimer.

It localises to the cell membrane. Its function is as follows. Probable receptor for SEMA4A involved in the regulation of T-cell function. The interaction with SEMA4A enhances T-cell activation. This is T-cell immunoglobulin and mucin domain-containing protein 2 (Timd2) from Rattus norvegicus (Rat).